Consider the following 361-residue polypeptide: DNA replication and repair protein RecF (361 aa).

Residue 30-37 (GPNGSGKT) participates in ATP binding.

It belongs to the RecF family.

The protein localises to the cytoplasm. The RecF protein is involved in DNA metabolism; it is required for DNA replication and normal SOS inducibility. RecF binds preferentially to single-stranded, linear DNA. It also seems to bind ATP. The sequence is that of DNA replication and repair protein RecF from Yersinia pestis.